A 147-amino-acid chain; its full sequence is MVHLTPEEKTAVNALWGKVNVDAVGGEALGRLLVVYPWTQRFFESFGDLSSPDAVMGNPKVKAHGKKVLGAFSDGLAHLDNLKGTFSQLSELHCDKLHVDPENFRLLGNVLVCVLARNFGKEFTPQVQAAYQKVVAGVANALAHKYH.

In terms of domain architecture, Globin spans 3 to 147 (HLTPEEKTAV…VANALAHKYH (145 aa)). Phosphoserine is present on Ser-51. Positions 64 and 93 each coordinate heme b.

This sequence belongs to the globin family. In terms of assembly, heterotetramer of two delta chains and two alpha chains. As to expression, red blood cells.

This is Hemoglobin subunit delta (HBD) from Gorilla gorilla gorilla (Western lowland gorilla).